A 115-amino-acid chain; its full sequence is Nucleoid-associated protein P9211_00201 (115 aa).

This sequence belongs to the YbaB/EbfC family. In terms of assembly, homodimer.

It localises to the cytoplasm. The protein resides in the nucleoid. Functionally, binds to DNA and alters its conformation. May be involved in regulation of gene expression, nucleoid organization and DNA protection. The chain is Nucleoid-associated protein P9211_00201 from Prochlorococcus marinus (strain MIT 9211).